The primary structure comprises 202 residues: Orotate phosphoribosyltransferase (202 aa).

5-phospho-alpha-D-ribose 1-diphosphate-binding positions include Lys-93 and 113-121 (EDIITTGGS). Orotate-binding residues include Thr-117 and Arg-145.

This sequence belongs to the purine/pyrimidine phosphoribosyltransferase family. PyrE subfamily. Homodimer. Mg(2+) serves as cofactor.

It catalyses the reaction orotidine 5'-phosphate + diphosphate = orotate + 5-phospho-alpha-D-ribose 1-diphosphate. It participates in pyrimidine metabolism; UMP biosynthesis via de novo pathway; UMP from orotate: step 1/2. Catalyzes the transfer of a ribosyl phosphate group from 5-phosphoribose 1-diphosphate to orotate, leading to the formation of orotidine monophosphate (OMP). The polypeptide is Orotate phosphoribosyltransferase (Campylobacter hominis (strain ATCC BAA-381 / DSM 21671 / CCUG 45161 / LMG 19568 / NCTC 13146 / CH001A)).